Here is a 122-residue protein sequence, read N- to C-terminus: Ribosome-binding factor A (122 aa).

This sequence belongs to the RbfA family. In terms of assembly, monomer. Binds 30S ribosomal subunits, but not 50S ribosomal subunits or 70S ribosomes.

It localises to the cytoplasm. Functionally, one of several proteins that assist in the late maturation steps of the functional core of the 30S ribosomal subunit. Associates with free 30S ribosomal subunits (but not with 30S subunits that are part of 70S ribosomes or polysomes). Required for efficient processing of 16S rRNA. May interact with the 5'-terminal helix region of 16S rRNA. The protein is Ribosome-binding factor A of Pelagibacter ubique (strain HTCC1062).